Here is a 1657-residue protein sequence, read N- to C-terminus: Thrombospondin type-1 domain-containing protein 7A (1657 aa).

Positions 1–47 are cleaved as a signal peptide; that stretch reads MGLQARRWASGSRGAAGPRRGVLQLLPLPLPLPLLLLLLLRPGAGRA. At 48 to 1607 the chain is on the extracellular side; it reads AAQGEAEAPT…FGPDGRLKTW (1560 aa). TSP type-1 domains are found at residues 57–116, 120–192, and 194–247; these read TLYL…KVCD, ELYD…IPCQ, and DCIV…SPCE. An N-linked (GlcNAc...) asparagine glycan is attached at asparagine 234. Positions 265 to 311 are disordered; the sequence is MPHSRQVRQARRRGKNKEREKDRSKGVKDPEARELIKKKRNRNRQNR. The stretch at 267–315 forms a coiled coil; the sequence is HSRQVRQARRRGKNKEREKDRSKGVKDPEARELIKKKRNRNRQNRQENK. Positions 269-280 are enriched in basic residues; the sequence is RQVRQARRRGKN. The span at 281–299 shows a compositional bias: basic and acidic residues; the sequence is KEREKDRSKGVKDPEAREL. A compositionally biased stretch (basic residues) spans 300–309; it reads IKKKRNRNRQ. Asparagine 332 carries an N-linked (GlcNAc...) asparagine glycan. 16 consecutive TSP type-1 domains span residues 360-416, 423-510, 512-574, 634-695, 696-769, 771-831, 832-904, 906-959, 960-1033, 1035-1095, 1096-1163, 1166-1220, 1221-1284, 1286-1341, 1342-1412, and 1414-1475; these read ECQV…LSQG, ATYG…IPCP, ECEV…PACY, DCVL…HPCT, VYHW…LPCK, DCIV…QACQ, SYRW…IPCQ, DCQL…CPCD, KYNA…IPCP, DCKL…SDCN, QYLW…LPCP, CVIS…KNCY, HYDY…VECP, NCQL…KPCY, RWQY…QPCP, and DCYL…GQCY. Cystine bridges form between cysteine 435/cysteine 505, cysteine 455/cysteine 509, and cysteine 466/cysteine 494. N-linked (GlcNAc...) asparagine glycosylation occurs at asparagine 450. Asparagine 500 carries an N-linked (GlcNAc...) asparagine glycan. Disulfide bonds link cysteine 635–cysteine 677 and cysteine 646–cysteine 650. The N-linked (GlcNAc...) asparagine glycan is linked to asparagine 679. 7 disulfide bridges follow: cysteine 689–cysteine 694, cysteine 707–cysteine 764, cysteine 728–cysteine 768, cysteine 739–cysteine 752, cysteine 772–cysteine 814, cysteine 783–cysteine 787, and cysteine 824–cysteine 830. A glycan (N-linked (GlcNAc...) asparagine) is linked at asparagine 717. Asparagine 968 carries N-linked (GlcNAc...) asparagine glycosylation. Disulfide bonds link cysteine 972–cysteine 1028, cysteine 994–cysteine 1032, cysteine 1005–cysteine 1018, cysteine 1036–cysteine 1073, cysteine 1047–cysteine 1051, and cysteine 1090–cysteine 1094. Residue asparagine 1043 is glycosylated (N-linked (GlcNAc...) asparagine). Asparagine 1182 is a glycosylation site (N-linked (GlcNAc...) asparagine). An intrachain disulfide couples cysteine 1213 to cysteine 1219. N-linked (GlcNAc...) asparagine glycosylation occurs at asparagine 1225. Disulfide bonds link cysteine 1232–cysteine 1279, cysteine 1240–cysteine 1283, cysteine 1251–cysteine 1264, cysteine 1287–cysteine 1325, cysteine 1298–cysteine 1302, cysteine 1335–cysteine 1340, cysteine 1351–cysteine 1407, cysteine 1358–cysteine 1411, cysteine 1369–cysteine 1388, cysteine 1415–cysteine 1459, cysteine 1426–cysteine 1430, and cysteine 1469–cysteine 1474. Asparagine 1276 carries N-linked (GlcNAc...) asparagine glycosylation. The N-linked (GlcNAc...) asparagine glycan is linked to asparagine 1366. 2 N-linked (GlcNAc...) asparagine glycosylation sites follow: asparagine 1500 and asparagine 1547. A disordered region spans residues 1570–1591; it reads DVKTSRAVHPTQPSSNPAGRGR. Residues 1608 to 1628 form a helical membrane-spanning segment; that stretch reads VYGVAAGAFVLLIFIVSMIYL. At 1629–1657 the chain is on the cytoplasmic side; that stretch reads ACKKPKKPQRRQNNRLKPLTLAYDGDADM.

Proteolytic cleavage in the extracellular region generates a 210 kDa soluble form. Post-translationally, extensively N-glycosylated. Detected on kidney podocytes along the glomerular capillary wall (at protein level).

Its subcellular location is the cell membrane. The protein localises to the cell projection. It is found in the secreted. In terms of biological role, plays a role in actin cytoskeleton rearrangement. The soluble form promotes endothelial cell migration and filopodia formation during sprouting angiogenesis via a FAK-dependent mechanism. The sequence is that of Thrombospondin type-1 domain-containing protein 7A (THSD7A) from Homo sapiens (Human).